A 454-amino-acid chain; its full sequence is MDTPRVLLWAIFLISFLWDLPGFQQASISSSSSSSTELDSTKDVGNRKEGKMQRTPQESAEGRTPPEHGLRQKDLRRRPPGQHQGQEPPGRGLRVVPHEYMLSIYKTYSIAEKLGINASFFQSSKSANTITSFVDRGLDDLSHTPLRRQKYLFDVSTLSDKEELVGAELRLYRQAPPTPWGLPARPLHLQLFPCLSPLLLDARTLDPQGPTQAGWEVFDVWQGLRPQPWKQLCLELRAAWGELDAGDTGARARGPQQPPPLDLRSLGFGRRVRPPQERALLVVFTRSQRKNLFTEMHEQLGSAEAAGAEGSWPAPSGSPDAGSWLPSPGRRRRRTAFASRHGKRHGKKSRLRCSRKPLHVNFKELGWDDWIIAPLEYEAYHCEGVCDFPLRSHLEPTNHAIIQTLMNSMDPGSTPPSCCVPTKLTPISILYIDAGNNVVYKQYEDMVVESCGCR.

The N-terminal stretch at 1–22 (MDTPRVLLWAIFLISFLWDLPG) is a signal peptide. The propeptide occupies 23 to 334 (FQQASISSSS…LPSPGRRRRR (312 aa)). A disordered region spans residues 28-93 (ISSSSSSSTE…QGQEPPGRGL (66 aa)). Composition is skewed to basic and acidic residues over residues 39–52 (DSTK…EGKM) and 60–73 (AEGR…LRQK). A compositionally biased stretch (low complexity) spans 81-92 (GQHQGQEPPGRG). A glycan (N-linked (GlcNAc...) asparagine) is linked at Asn-117. 2 disordered regions span residues 247 to 268 (DTGA…SLGF) and 303 to 350 (AEAA…KKSR). Residues 303 to 319 (AEAAGAEGSWPAPSGSP) show a composition bias toward low complexity. Basic residues predominate over residues 329–350 (GRRRRRTAFASRHGKRHGKKSR). Intrachain disulfides connect Cys-353/Cys-419, Cys-382/Cys-451, and Cys-386/Cys-453.

The protein belongs to the TGF-beta family. As to quaternary structure, homodimer; disulfide-linked. Expressed in different subsets of developing joints. Highly expressed in the cochlea.

The protein localises to the secreted. In terms of biological role, growth factor that controls proliferation and cellular differentiation in the retina and bone formation. Plays a key role in regulating apoptosis during retinal development. Establishes dorsal-ventral positional information in the retina and controls the formation of the retinotectal map. Required for normal formation of bones and joints in the limbs, skull, digits and axial skeleton. Plays a key role in establishing boundaries between skeletal elements during development. Regulation of GDF6 expression seems to be a mechanism for evolving species-specific changes in skeletal structures. Seems to positively regulate differentiation of chondrogenic tissue through the growth factor receptors subunits BMPR1A, BMPR1B, BMPR2 and ACVR2A, leading to the activation of SMAD1-SMAD5-SMAD8 complex. The regulation of chondrogenic differentiation is inhibited by NOG. Also involved in the induction of adipogenesis from mesenchymal stem cells. This mechanism acts through the growth factor receptors subunits BMPR1A, BMPR2 and ACVR2A and the activation of SMAD1-SMAD5-SMAD8 complex and MAPK14/p38. This is Growth/differentiation factor 6 (Gdf6) from Mus musculus (Mouse).